Here is a 244-residue protein sequence, read N- to C-terminus: L-xylulose reductase (244 aa).

Methionine 1 bears the N-acetylmethionine mark. 11-39 contributes to the NADP(+) binding site; sequence LVTGAGKGIGRSTVLALQAAGAHVVAVSR. Omega-N-methylarginine is present on arginine 21. Serine 46 bears the Phosphoserine mark. Substrate is bound at residue serine 136. Tyrosine 149 acts as the Proton acceptor in catalysis. Residue lysine 153 is part of the active site.

This sequence belongs to the short-chain dehydrogenases/reductases (SDR) family. In terms of assembly, homotetramer. Highly expressed in kidney and liver. Expressed in epididymis. Weakly expressed in brain, heart, lung, spleen and testis.

The protein resides in the membrane. Its subcellular location is the cytoplasmic vesicle. It is found in the secretory vesicle. The protein localises to the acrosome. It catalyses the reaction xylitol + NADP(+) = L-xylulose + NADPH + H(+). Its function is as follows. Catalyzes the NADPH-dependent reduction of several pentoses, tetroses, trioses, alpha-dicarbonyl compounds and L-xylulose. Participates in the uronate cycle of glucose metabolism. May play a role in the water absorption and cellular osmoregulation in the proximal renal tubules by producing xylitol, an osmolyte, thereby preventing osmolytic stress from occurring in the renal tubules. This Mesocricetus auratus (Golden hamster) protein is L-xylulose reductase (DCXR).